Reading from the N-terminus, the 449-residue chain is C4-dicarboxylate transport protein (449 aa).

A run of 8 helical transmembrane segments spans residues 18–38 (PFYL…ALLG), 61–81 (MIIS…VAHV), 93–113 (VYFL…AHVV), 159–179 (FVGD…IALA), 202–222 (LVQM…AFTI), 244–264 (SLLF…FSIL), 346–366 (LFLV…AGFI), and 369–389 (AATL…ILGV).

Belongs to the dicarboxylate/amino acid:cation symporter (DAACS) (TC 2.A.23) family.

Its subcellular location is the cell inner membrane. Functionally, responsible for the transport of dicarboxylates such as succinate, fumarate, and malate from the periplasm across the membrane. The polypeptide is C4-dicarboxylate transport protein (Xylella fastidiosa (strain M23)).